We begin with the raw amino-acid sequence, 140 residues long: uncharacterized protein (140 aa).

The segment at 62–140 (TEARAGRGGP…PQGRWGPSLG (79 aa)) is disordered. Residues 71-94 (PATARSRVSADSQGGRAGSSSPSS) show a composition bias toward low complexity.

This is an uncharacterized protein from Homo sapiens (Human).